The primary structure comprises 272 residues: Digeranylgeranylglyceryl phosphate synthase (272 aa).

Helical transmembrane passes span 16–36 (AFIA…EIIL), 79–99 (ALYY…IISL), 100–120 (ENGI…YDLK), 124–144 (FIGN…GGLI), 148–168 (VNLG…REII), 194–214 (AVML…LLYY), 217–237 (IFSI…VYSA), and 252–272 (ISKY…MGAL).

This sequence belongs to the UbiA prenyltransferase family. DGGGP synthase subfamily. Mg(2+) serves as cofactor.

The protein resides in the cell membrane. The enzyme catalyses sn-3-O-(geranylgeranyl)glycerol 1-phosphate + (2E,6E,10E)-geranylgeranyl diphosphate = 2,3-bis-O-(geranylgeranyl)-sn-glycerol 1-phosphate + diphosphate. The protein operates within membrane lipid metabolism; glycerophospholipid metabolism. Functionally, prenyltransferase that catalyzes the transfer of the geranylgeranyl moiety of geranylgeranyl diphosphate (GGPP) to the C2 hydroxyl of (S)-3-O-geranylgeranylglyceryl phosphate (GGGP). This reaction is the second ether-bond-formation step in the biosynthesis of archaeal membrane lipids. This chain is Digeranylgeranylglyceryl phosphate synthase, found in Methanosphaera stadtmanae (strain ATCC 43021 / DSM 3091 / JCM 11832 / MCB-3).